A 354-amino-acid chain; its full sequence is Ferrochelatase (354 aa).

Fe cation is bound by residues His191 and Glu271.

The protein belongs to the ferrochelatase family.

Its subcellular location is the cytoplasm. It catalyses the reaction heme b + 2 H(+) = protoporphyrin IX + Fe(2+). It functions in the pathway porphyrin-containing compound metabolism; protoheme biosynthesis; protoheme from protoporphyrin-IX: step 1/1. In terms of biological role, catalyzes the ferrous insertion into protoporphyrin IX. This is Ferrochelatase from Rickettsia bellii (strain OSU 85-389).